Reading from the N-terminus, the 110-residue chain is UPF0473 protein SSP1146 (110 aa).

This sequence belongs to the UPF0473 family.

The protein is UPF0473 protein SSP1146 of Staphylococcus saprophyticus subsp. saprophyticus (strain ATCC 15305 / DSM 20229 / NCIMB 8711 / NCTC 7292 / S-41).